Reading from the N-terminus, the 99-residue chain is Putative gene 45 protein (99 aa).

The protein is Putative gene 45 protein (45) of Bacillus phage SP01 (Bacteriophage SP01).